The sequence spans 1254 residues: Unconventional myosin-VI (1254 aa).

Residues 2–53 enclose the Myosin N-terminal SH3-like domain; sequence EDGKPVWAPHPTDGFQVGNIVDIGPDSLTIEPLNQKGKTFLALINQVFPAEE. The Myosin motor domain occupies 57–772; the sequence is KDVEDNCSLM…KFAEFDQIMK (716 aa). 151-158 contributes to the ATP binding site; that stretch reads GESGAGKT. S267 carries the phosphoserine modification. The responsible for slow ATPase activity stretch occupies residues 273–317; the sequence is YLNRGCTRYFANKETDKQILQNRKSPEYLKAGSLKDPLLDDHGDF. T406 carries the post-translational modification Phosphothreonine. Position 605 is a phosphoserine (S605). Residues 666–673 are actin-binding; the sequence is FIRCIKPN. The required for binding calmodulin stretch occupies residues 783-811; the sequence is KRVNHWLICSRWKKVQWCSLSVIKLKNKI. In terms of domain architecture, IQ spans 814-843; that stretch reads RAEACIKMQKTIRMWLCKRRHKPRIDGLVK. The tract at residues 836–917 is three-helix bundle; that stretch reads PRIDGLVKVG…AVLLSALQKK (82 aa). An SAH region spans residues 918 to 985; sequence KQQEEEAERL…EDDEKRIQAE (68 aa). The disordered stretch occupies residues 935–956; that stretch reads EKERKRREEDEQRRRKEEEERR. Position 1026 is a phosphoserine (S1026). The tract at residues 1037-1245 is interaction with TAX1BP1 and CALCOCO2/NDP52; it reads RGPAVQATKA…ESRQARPTYA (209 aa). The interval 1085–1087 is interaction with OPTN; the sequence is RRL. Residues 1096-1117 form a disordered region; that stretch reads KNKKRNTETEQRAPKSVTDYAQ. Positions 1117–1245 are interaction with TOM1; that stretch reads QQNPAVQLPA…ESRQARPTYA (129 aa).

The protein belongs to the TRAFAC class myosin-kinesin ATPase superfamily. Myosin family. In terms of assembly, homodimer; dimerization seems to implicate the unfolding of the three-helix bundle region creating an additional calmodulin binding site, and cargo binding. Component of the DISP/DOCK7-induced septin displacement complex, at least composed of DOCK7, LRCH3 and MYO6. Able to function as a monomer under specific conditions in vitro. Forms a complex with CFTR and DAB2 in the apical membrane of epithelial cells. Binding to calmodulin through a unique insert, not found in other myosins, located in the neck region between the motor domain and the IQ domain appears to contribute to the directionality reversal. This interaction occurs only if the C-terminal lobe of calmodulin is occupied by calcium. Interaction with F-actin/ACTN1 occurs only at the apical brush border domain of the proximal tubule cells. Interacts with DAB2. In vitro, the C-terminal globular tail binds a C-terminal region of DAB2. Interacts with CFTR. Interacts with CABP5. Interacts (via residues 1117-1245) with TOM1 (via residues 392-463). Interacts (via residues 1060-1285) with OPTN. Interacts (via residues 1060-1285) with TAX1BP1 and CALCOCO2/NDP52. Interacts with TOM1L2. Interacts with CLIC5; may work together in a complex which also includes RDX and MYO6 to stabilize linkages between the plasma membrane and subjacent actin cytoskeleton at the base of stereocilia. In terms of processing, phosphorylation in the motor domain, induced by EGF, results in translocation of MYO6 from the cell surface to membrane ruffles and affects F-actin dynamics. Phosphorylated in vitro by p21-activated kinase (PAK). Expressed in all tissues examined including kidney cortex, intestinal mucosa, liver, lung, heart, jowl muscle, brain cortex and medulla, and in the epithelial cell line, LLC-PK1 (at protein level). In the kidney, located to the brush border of adult kidney proximal tubule cells.

Its subcellular location is the golgi apparatus. It is found in the trans-Golgi network membrane. It localises to the nucleus. The protein resides in the cytoplasm. The protein localises to the perinuclear region. Its subcellular location is the membrane. It is found in the clathrin-coated pit. It localises to the cytoplasmic vesicle. The protein resides in the clathrin-coated vesicle. The protein localises to the cell projection. Its subcellular location is the filopodium. It is found in the ruffle membrane. It localises to the microvillus. The protein resides in the cytosol. Functionally, myosins are actin-based motor molecules with ATPase activity. Unconventional myosins serve in intracellular movements. Myosin 6 is a reverse-direction motor protein that moves towards the minus-end of actin filaments. Has slow rate of actin-activated ADP release due to weak ATP binding. Functions in a variety of intracellular processes such as vesicular membrane trafficking and cell migration. Required for the structural integrity of the Golgi apparatus via the p53-dependent pro-survival pathway. Appears to be involved in a very early step of clathrin-mediated endocytosis in polarized epithelial cells. Together with TOM1, mediates delivery of endocytic cargo to autophagosomes thereby promoting autophagosome maturation and driving fusion with lysosomes. Links TOM1 with autophagy receptors, such as TAX1BP1; CALCOCO2/NDP52 and OPTN. May act as a regulator of F-actin dynamics. As part of the DISP complex, may regulate the association of septins with actin and thereby regulate the actin cytoskeleton. May play a role in transporting DAB2 from the plasma membrane to specific cellular targets. May play a role in the extension and network organization of neurites. Required for structural integrity of inner ear hair cells. Required for the correct localization of CLIC5 and RDX at the stereocilium base. Modulates RNA polymerase II-dependent transcription. This is Unconventional myosin-VI (MYO6) from Sus scrofa (Pig).